A 482-amino-acid polypeptide reads, in one-letter code: Ras GTPase-activating protein-binding protein 2 (482 aa).

Residues 11–133 (VGREFVRQYY…FYVHNDMFRY (123 aa)) form the NTF2 domain. The segment covering 140–158 (DSEPELDEESEDEVEEEQE) has biased composition (acidic residues). Disordered regions lie at residues 140–171 (DSEP…QENA) and 187–318 (EPLE…EQND). Phosphoserine is present on residues serine 141, serine 149, and serine 225. Residues 142 to 220 (EPELDEESED…PQVEEKNLEE (79 aa)) are acidic disordered region. Over residues 191 to 225 (ESSHEPEPEPESETKTEELKPQVEEKNLEELEEKS) the composition is skewed to basic and acidic residues. The residue at position 227 (threonine 227) is a Phosphothreonine. A Phosphoserine modification is found at serine 235. Over residues 247 to 264 (ASVTSKNLPPSGTVSSSG) the composition is skewed to polar residues. Lysine 281 is covalently cross-linked (Glycyl lysine isopeptide (Lys-Gly) (interchain with G-Cter in SUMO2)). The segment covering 290–300 (RVREQRPRERP) has biased composition (basic and acidic residues). Residues 331 to 409 (HQLFVGNLPH…VRLNVEEKKT (79 aa)) enclose the RRM domain. Residue lysine 392 is modified to N6-succinyllysine. An RG-rich region region spans residues 404-476 (VEEKKTRAAR…GRGTGQMEGR (73 aa)). The span at 408–432 (KTRAARERETRGGGDDRRDIRRNDR) shows a compositional bias: basic and acidic residues. A disordered region spans residues 408–482 (KTRAARERET…MEGRFTGQRR (75 aa)). The segment covering 433–445 (GPGGPRGIVGGGM) has biased composition (gly residues). At arginine 457 the chain carries Omega-N-methylarginine. The residue at position 466 (serine 466) is a Phosphoserine. Arginine 468 carries the post-translational modification Omega-N-methylarginine.

As to quaternary structure, forms homooligomers. Forms heterodimers with G3BP1. Interacts with NFKBIA (via N-terminus). Interacts (via NTF2 domain) with USP10; inhibiting stress granule formation. Interacts (via NTF2 domain) with CAPRIN1; promoting stress granule formation. Associates (via RG-rich region) with 40S ribosome subunits. Interacts with PABPC1. (Microbial infection) Interacts with non-structural protein 3 (via C-terminus) of Sindbis virus and Semliki forest virus; this interaction inhibits the formation of host stress granules on viral mRNAs and the nsp3-G3BP2 complexes bind viral RNAs and probably orchestrate the assembly of viral replication complexes. Post-translationally, (Microbial infection) Cleaved by foot-and-mouth disease virus leader protease; this cleavage suppresses the formation of cytoplasmic stress granules.

The protein localises to the cytoplasm. The protein resides in the stress granule. Its activity is regulated as follows. Under physiological conditions, G3BP2 adopts a compact state that is stabilized by intramolecular interactions between the RG-rich and the acidic regions that inhibit phase separation. Upon stress, polysomes disassemble and mRNAs are released in an unfolded protein-free state. Binding of unfolded mRNA to G3BP2 outcompetes the intramolecular interactions and RNA-bound G3BP2 adopts an expanded conformation in which the RG-rich region becomes exposed to engage in protein-protein and protein-RNA interactions, allowing physical cross-linking of RNA molecules to form protein-RNA condensates, leading to liquid-liquid phase separation (LLPS). Its function is as follows. Scaffold protein that plays an essential role in cytoplasmic stress granule formation which acts as a platform for antiviral signaling. Plays an essential role in stress granule formation. Stress granules are membraneless compartments that store mRNAs and proteins, such as stalled translation pre-initiation complexes, in response to stress. Promotes formation of stress granules phase-separated membraneless compartment by undergoing liquid-liquid phase separation (LLPS) upon unfolded RNA-binding: functions as a molecular switch that triggers RNA-dependent LLPS in response to a rise in intracellular free RNA concentrations. The sequence is that of Ras GTPase-activating protein-binding protein 2 from Homo sapiens (Human).